We begin with the raw amino-acid sequence, 146 residues long: Cyanate hydratase (146 aa).

Active-site residues include R87, E90, and S113.

It belongs to the cyanase family.

It catalyses the reaction cyanate + hydrogencarbonate + 3 H(+) = NH4(+) + 2 CO2. Its function is as follows. Catalyzes the reaction of cyanate with bicarbonate to produce ammonia and carbon dioxide. The protein is Cyanate hydratase of Nostoc sp. (strain PCC 7120 / SAG 25.82 / UTEX 2576).